Reading from the N-terminus, the 215-residue chain is Chaperone protein TorD (215 aa).

It belongs to the TorD/DmsD family. TorD subfamily.

It localises to the cytoplasm. Its function is as follows. Involved in the biogenesis of TorA. Acts on TorA before the insertion of the molybdenum cofactor and, as a result, probably favors a conformation of the apoenzyme that is competent for acquiring the cofactor. In Vibrio parahaemolyticus serotype O3:K6 (strain RIMD 2210633), this protein is Chaperone protein TorD.